Consider the following 548-residue polypeptide: Membrane protein insertase YidC (548 aa).

The helical transmembrane segment at 6–26 (NLLIIALLFVSFMIWQAWEQD) threads the bilayer. The disordered stretch occupies residues 28–52 (NPQPQQQTTQTTTTAAGSAADQGVP). Residues 29 to 41 (PQPQQQTTQTTTT) show a composition bias toward low complexity. Helical transmembrane passes span 345–365 (KFIHSFLGNWGFSIIVITFIV), 420–440 (LGGCFPLIIQMPIFLALYYML), 458–478 (LSAQDPYYILPIIMGATMFFI), and 499–519 (PVIFTVFFLWFPSGLVVYYIV).

It belongs to the OXA1/ALB3/YidC family. Type 1 subfamily. As to quaternary structure, interacts with the Sec translocase complex via SecD. Specifically interacts with transmembrane segments of nascent integral membrane proteins during membrane integration.

It is found in the cell inner membrane. Its function is as follows. Required for the insertion and/or proper folding and/or complex formation of integral membrane proteins into the membrane. Involved in integration of membrane proteins that insert both dependently and independently of the Sec translocase complex, as well as at least some lipoproteins. Aids folding of multispanning membrane proteins. The chain is Membrane protein insertase YidC from Klebsiella pneumoniae subsp. pneumoniae (strain ATCC 700721 / MGH 78578).